Reading from the N-terminus, the 555-residue chain is Transmembrane protein 87B (555 aa).

A signal peptide spans 1–42; the sequence is MAAACRSEAGLLPSLLCRRPAGAQLLRVALCLLCWVPAAVDA. The Lumenal segment spans residues 43 to 216; that stretch reads VPELGLWTRT…HGYISASDWP (174 aa). N-linked (GlcNAc...) asparagine glycans are attached at residues asparagine 68, asparagine 160, and asparagine 198. Residues 217–237 form a helical membrane-spanning segment; it reads LMIFYMVMCIVYILYGVLWLL. Residues 238–248 are Cytoplasmic-facing; the sequence is WSACYWKDILR. The chain crosses the membrane as a helical span at residues 249–269; it reads IQFWIAAVIFLGMLEKAVFYS. At 270 to 300 the chain is on the lumenal side; it reads EYQNINSTGLSTQGLLIFAELISAVKRTLAR. A glycan (N-linked (GlcNAc...) asparagine) is linked at asparagine 275. The chain crosses the membrane as a helical span at residues 301 to 321; sequence LLVIIVSLGYGIVKPRLGTVM. Residues 322–323 are Cytoplasmic-facing; the sequence is HR. Residues 324–344 form a helical membrane-spanning segment; that stretch reads VIGLGLLYLIFAAIEGVMRVI. Residues 345–351 are Lumenal-facing; sequence GGSKHLA. A helical membrane pass occupies residues 352–372; the sequence is VVLTDIVLAVIDSIFVWFIFI. Residues 373 to 394 lie on the Cytoplasmic side of the membrane; that stretch reads SLAQTMKTLRLRKNTVKFSLYR. A helical membrane pass occupies residues 395-415; the sequence is HFTNTLIFAVLASIVFMVWTT. The Lumenal portion of the chain corresponds to 416 to 429; the sequence is KTFRIAKCQSDWME. Residues 430–450 form a helical membrane-spanning segment; that stretch reads LWVDDAFWSFLFSVILIVIMF. Residues 451 to 555 are Cytoplasmic-facing; the sequence is LWRPSANNQR…EKMFSSEKIM (105 aa). Phosphoserine occurs at positions 470, 497, and 534.

It belongs to the LU7TM family. TMEM87 subfamily.

It localises to the golgi apparatus membrane. Functionally, may be involved in retrograde transport from endosomes to the trans-Golgi network (TGN). This chain is Transmembrane protein 87B, found in Mus musculus (Mouse).